A 425-amino-acid polypeptide reads, in one-letter code: Type I restriction enzyme MjaVIII specificity subunit (425 aa).

Belongs to the type-I restriction system S methylase family. In terms of assembly, the type I restriction/modification system is composed of three polypeptides R, M and S.

In terms of biological role, the specificity (S) subunit of a type I restriction enzyme; this subunit dictates DNA sequence specificity. The M and S subunits together form a methyltransferase (MTase) that methylates A-2 on the top and A-3 on the bottom strand of the sequence 5'-GAYN(5)GTAA-3'. In the presence of the R subunit the complex can also act as an endonuclease, binding to the same target sequence but cutting the DNA some distance from this site. Whether the DNA is cut or modified depends on the methylation state of the target sequence. When the target site is unmodified, the DNA is cut. When the target site is hemimethylated, the complex acts as a maintenance MTase modifying the DNA so that both strands become methylated. After locating a non-methylated recognition site, the enzyme complex serves as a molecular motor that translocates DNA in an ATP-dependent manner until a collision occurs that triggers cleavage. This chain is Type I restriction enzyme MjaVIII specificity subunit, found in Methanocaldococcus jannaschii (strain ATCC 43067 / DSM 2661 / JAL-1 / JCM 10045 / NBRC 100440) (Methanococcus jannaschii).